Here is a 90-residue protein sequence, read N- to C-terminus: DNA-binding protein HU-alpha (90 aa).

Belongs to the bacterial histone-like protein family. As to quaternary structure, heterodimer of an alpha and a beta chain.

Its function is as follows. Histone-like DNA-binding protein which is capable of wrapping DNA to stabilize it, and thus to prevent its denaturation under extreme environmental conditions. In Salmonella typhi, this protein is DNA-binding protein HU-alpha (hupA).